The primary structure comprises 417 residues: NADH-quinone oxidoreductase subunit D (417 aa).

The protein belongs to the complex I 49 kDa subunit family. In terms of assembly, NDH-1 is composed of 14 different subunits. Subunits NuoB, C, D, E, F, and G constitute the peripheral sector of the complex.

The protein resides in the cell inner membrane. The enzyme catalyses a quinone + NADH + 5 H(+)(in) = a quinol + NAD(+) + 4 H(+)(out). Its function is as follows. NDH-1 shuttles electrons from NADH, via FMN and iron-sulfur (Fe-S) centers, to quinones in the respiratory chain. The immediate electron acceptor for the enzyme in this species is believed to be ubiquinone. Couples the redox reaction to proton translocation (for every two electrons transferred, four hydrogen ions are translocated across the cytoplasmic membrane), and thus conserves the redox energy in a proton gradient. This chain is NADH-quinone oxidoreductase subunit D, found in Nitrosomonas europaea (strain ATCC 19718 / CIP 103999 / KCTC 2705 / NBRC 14298).